Reading from the N-terminus, the 96-residue chain is Mapk-regulated corepressor-interacting protein 1 (96 aa).

2 disordered regions span residues 1–28 and 76–96; these read MASS…GSEI and AFKP…AKKS. The short motif at 79–83 is the PXDLS motif element; it reads PVDLS. Basic and acidic residues predominate over residues 81–96; that stretch reads DLSDLKRRNTQDAKKS.

Belongs to the MCRIP family.

It localises to the nucleus. Its subcellular location is the cytoplasm. It is found in the stress granule. In terms of biological role, may play a role in the regulation of the epithelial-mesenchymal transition. This chain is Mapk-regulated corepressor-interacting protein 1 (MCRIP1), found in Gallus gallus (Chicken).